The following is a 228-amino-acid chain: Small ribosomal subunit protein uS7A (228 aa).

It belongs to the universal ribosomal protein uS7 family.

The chain is Small ribosomal subunit protein uS7A (RpS5a) from Drosophila melanogaster (Fruit fly).